Consider the following 184-residue polypeptide: MVVVAVSGQPGSGKTTIAREIARVLKVPLVSSGTLFREMATKMGIDFLEFHKYAESNPEIDKSVDTAAVERAKAGNVVLEGHLTAWVVRPYADVCIYLKASPEVRARRVALRDGKSLEEAYREVTEREELNRRRYLAIYGIDIKDLSIFDLVVDTSFLSVNDAVRISVDFTCTTLSFKYSKKVC.

Position 8–16 (G8–T16) interacts with ATP.

Belongs to the cytidylate kinase family. Type 2 subfamily.

Its subcellular location is the cytoplasm. The enzyme catalyses CMP + ATP = CDP + ADP. The catalysed reaction is dCMP + ATP = dCDP + ADP. This Pyrobaculum arsenaticum (strain DSM 13514 / JCM 11321 / PZ6) protein is Cytidylate kinase.